The chain runs to 360 residues: MDVGVFIPIGNNGWLISENAPQYMPTFELNKAIVQKAEGYGFDFALSMIKLRGFGGKTEFWEHNLESFTLMAGLAAVTSKIQLFATAATLTLPPAIVARMASTIDSISGGRFGVNLVTGWQKPEYSQMGLWPGDEFFGTRYQYLGEYAQVLRDLWATGRSDFKGEHFQMEDCRVSPKPQADMKIICAGSSDAGMAFSAQYADYNFCFGKGVNTPTAFAPAAERLQAACAKTGRHVTSCVLFMVIADETDEAARAKWEHYKAGADEEAIAWLGEQGAADKGADSNIRQMADPTSAVNINMGTLVGSYANVARMLDEIATVPGMQGVMLTFDDFLEGVEAFGQKIQPLMQSRRHVTALKESA.

FMN contacts are provided by residues 49-50 (IK), Asn115, Glu124, 140-141 (RY), and Ser190.

It belongs to the NtaA/SnaA/DszA monooxygenase family. RutA subfamily.

It carries out the reaction uracil + FMNH2 + NADH + O2 = (Z)-3-ureidoacrylate + FMN + NAD(+) + H2O + H(+). The catalysed reaction is thymine + FMNH2 + NADH + O2 = (Z)-2-methylureidoacrylate + FMN + NAD(+) + H2O + H(+). Its function is as follows. Catalyzes the pyrimidine ring opening between N-3 and C-4 by an unusual flavin hydroperoxide-catalyzed mechanism, adding oxygen atoms in the process to yield ureidoacrylate peracid, that immediately reacts with FMN forming ureidoacrylate and FMN-N(5)-oxide. The FMN-N(5)-oxide reacts spontaneously with NADH to produce FMN. Requires the flavin reductase RutF to regenerate FMN in vivo. This Stutzerimonas stutzeri (strain A1501) (Pseudomonas stutzeri) protein is Pyrimidine monooxygenase RutA.